The chain runs to 366 residues: Dihydroflavonol 4-reductase (366 aa).

Residues lysine 45 and tyrosine 164 each contribute to the NADP(+) site.

It belongs to the NAD(P)-dependent epimerase/dehydratase family. Dihydroflavonol-4-reductase subfamily.

The catalysed reaction is a (2R,3S,4S)-leucoanthocyanidin + NADP(+) = a (2R,3R)-dihydroflavonol + NADPH + H(+). The enzyme catalyses (2S)-flavan-4-ol + NADP(+) = (2S)-flavanone + NADPH + H(+). The protein operates within pigment biosynthesis; anthocyanin biosynthesis. Bifunctional enzyme involved in flavonoid metabolism. This Gerbera hybrida (Daisy) protein is Dihydroflavonol 4-reductase (DFR).